A 283-amino-acid polypeptide reads, in one-letter code: Nucleotide-binding protein ACIAD3059 (283 aa).

9 to 16 lines the ATP pocket; it reads GQSGSGKS. Residue 59-62 participates in GTP binding; sequence DVRS.

It belongs to the RapZ-like family.

Functionally, displays ATPase and GTPase activities. The sequence is that of Nucleotide-binding protein ACIAD3059 from Acinetobacter baylyi (strain ATCC 33305 / BD413 / ADP1).